The following is a 393-amino-acid chain: Putative cytochrome P450 143 (393 aa).

C342 is a heme binding site.

Belongs to the cytochrome P450 family. Heme serves as cofactor.

The polypeptide is Putative cytochrome P450 143 (cyp143) (Mycobacterium bovis (strain ATCC BAA-935 / AF2122/97)).